Here is a 231-residue protein sequence, read N- to C-terminus: MMYRVNHIMRTINEMSSYTPHMKVNRIAERLSKVQKISFCISVISFFLLAIITLTYGPFNTKSNLSFISALSLYFINVIMGVTYLSVPVINTIKYIYNFKGEVVNELIYDIDSDEQHIEALLPYSLEELTYVSNCIQVRIPKIKSKCFLWGGGKTAIISILCLSYSAICIVNGGSIDGIFVGETGDKIIVAIMFFILYTSLMNMFFKQKLLYLQNLKMIIDMTIKIKRNFT.

A run of 4 helical transmembrane segments spans residues 39–59, 70–90, 156–176, and 189–206; these read FCIS…YGPF, ALSL…VPVI, AIIS…GGSI, and IVAI…NMFF.

The protein belongs to the FliR/MopE/SpaR family.

It is found in the cell membrane. This is an uncharacterized protein from Escherichia coli (strain K12).